Here is a 314-residue protein sequence, read N- to C-terminus: Malate dehydrogenase (314 aa).

NAD(+)-binding positions include 12-17 and D36; that span reads GAGNIG. Substrate-binding residues include R85 and R91. NAD(+) contacts are provided by residues N98 and 121 to 123; that span reads VTN. Substrate is bound by residues N123 and R154. H178 serves as the catalytic Proton acceptor.

It belongs to the LDH/MDH superfamily. MDH type 3 family.

It carries out the reaction (S)-malate + NAD(+) = oxaloacetate + NADH + H(+). Functionally, catalyzes the reversible oxidation of malate to oxaloacetate. This chain is Malate dehydrogenase, found in Wolbachia pipientis subsp. Culex pipiens (strain wPip).